A 564-amino-acid chain; its full sequence is 4-coumarate--CoA ligase 1 (564 aa).

ATP is bound by residues Ser209, Ser210, Gly211, Thr212, Thr213, and Lys217. (E)-4-coumaroyl-AMP is bound by residues Tyr259 and Thr263. Arg280 contacts CoA. The SBD1 stretch occupies residues 282–351 (DLAAMMDLVE…AKLPGAVLGQ (70 aa)). 5 residues coordinate (E)-4-coumaroyl-AMP: Ala329, Gln351, Gly352, Thr356, and Met364. Gln351, Gly352, and Thr356 together coordinate ATP. The tract at residues 352-419 (GYGMTEAGPV…IRGQQIMKGY (68 aa)) is SBD2. ATP is bound by residues Asp440 and Arg455. Positions 457 and 461 each coordinate (E)-4-coumaroyl-AMP. Residues Arg463 and Gly464 each coordinate CoA. Lys547 serves as a coordination point for ATP.

Belongs to the ATP-dependent AMP-binding enzyme family. Requires Mg(2+) as cofactor. Expressed in roots, stems, leaf blades and leaf sheaths.

It catalyses the reaction (E)-ferulate + ATP + CoA = (E)-feruloyl-CoA + AMP + diphosphate. It carries out the reaction (E)-4-coumarate + ATP + CoA = (E)-4-coumaroyl-CoA + AMP + diphosphate. The enzyme catalyses (E)-cinnamate + ATP + CoA = (E)-cinnamoyl-CoA + AMP + diphosphate. The catalysed reaction is (E)-caffeate + ATP + CoA = (E)-caffeoyl-CoA + AMP + diphosphate. It catalyses the reaction (E)-ferulate + ATP + H(+) = (E)-feruloyl-AMP + diphosphate. It carries out the reaction (E)-feruloyl-AMP + CoA = (E)-feruloyl-CoA + AMP + H(+). The enzyme catalyses (E)-4-coumarate + ATP + H(+) = (E)-4-coumaroyl-AMP + diphosphate. The catalysed reaction is (E)-4-coumaroyl-AMP + CoA = (E)-4-coumaroyl-CoA + AMP + H(+). It catalyses the reaction (E)-caffeate + ATP + H(+) = (E)-caffeoyl-AMP + diphosphate. It carries out the reaction (E)-caffeoyl-AMP + CoA = (E)-caffeoyl-CoA + AMP + H(+). Its pathway is phytoalexin biosynthesis; 3,4',5-trihydroxystilbene biosynthesis; 3,4',5-trihydroxystilbene from trans-4-coumarate: step 1/2. Involved in the phenylpropanoid metabolism by mediating the activation of a number of hydroxycinnamates for the biosynthesis of monolignols and other phenolic secondary metabolites. Catalyzes the formation of CoA esters of cinnamate, 4-coumarate, caffeate and ferulate. Is more efficient with substrates in the following order: ferulate &gt; 4-coumarate &gt; cinnamate &gt; caffeate. Cannot convert sinapate to its corresponding CoA ester. Follows a two-step reaction mechanism, wherein the carboxylate substrate first undergoes adenylation by ATP, followed by a thioesterification in the presence of CoA to yield the final CoA thioester. The chain is 4-coumarate--CoA ligase 1 from Oryza sativa subsp. japonica (Rice).